The primary structure comprises 236 residues: 2,3,4,5-tetrahydropyridine-2,6-dicarboxylate N-acetyltransferase (236 aa).

Belongs to the transferase hexapeptide repeat family. DapH subfamily.

It carries out the reaction (S)-2,3,4,5-tetrahydrodipicolinate + acetyl-CoA + H2O = L-2-acetamido-6-oxoheptanedioate + CoA. Its pathway is amino-acid biosynthesis; L-lysine biosynthesis via DAP pathway; LL-2,6-diaminopimelate from (S)-tetrahydrodipicolinate (acetylase route): step 1/3. Its function is as follows. Catalyzes the transfer of an acetyl group from acetyl-CoA to tetrahydrodipicolinate. In Clostridium botulinum (strain Loch Maree / Type A3), this protein is 2,3,4,5-tetrahydropyridine-2,6-dicarboxylate N-acetyltransferase.